The primary structure comprises 433 residues: Probable beta-1,3-galactosyl-O-glycosyl-glycoprotein beta-1,6-N-acetylglucosaminyltransferase 7 (433 aa).

Over 1–8 (MSQLRTTK) the chain is Cytoplasmic. A helical; Signal-anchor for type II membrane protein membrane pass occupies residues 9–25 (AGLVACGMICAFIFLYL). At 26-433 (RNPGPEEAEA…QSHFNSQPHH (408 aa)) the chain is on the extracellular side. Cystine bridges form between Cys-57/Cys-209, Cys-143/Cys-358, Cys-164/Cys-191, and Cys-367/Cys-398. N-linked (GlcNAc...) asparagine glycosylation is present at Asn-112. The tract at residues 233–275 (NITPGVTPPANSKPKTGQGPPKPSPDENSYTAPNTIFKQSPPH) is disordered. Residues 258–275 (DENSYTAPNTIFKQSPPH) show a composition bias toward polar residues. The tract at residues 413 to 433 (VPPEPHWQFPQQSHFNSQPHH) is disordered. Residues 421–433 (FPQQSHFNSQPHH) show a composition bias toward polar residues.

The protein belongs to the glycosyltransferase 14 family.

The protein resides in the golgi apparatus membrane. Its pathway is protein modification; protein glycosylation. Probable glycosyltransferase. The polypeptide is Probable beta-1,3-galactosyl-O-glycosyl-glycoprotein beta-1,6-N-acetylglucosaminyltransferase 7 (Mus musculus (Mouse)).